A 609-amino-acid chain; its full sequence is Glutamine--fructose-6-phosphate aminotransferase [isomerizing] (609 aa).

Cys2 serves as the catalytic Nucleophile; for GATase activity. Positions 2–218 constitute a Glutamine amidotransferase type-2 domain; that stretch reads CGIVGAIAQR…EGDIAEITRR (217 aa). SIS domains are found at residues 286–426 and 458–599; these read ADEL…LKGL and LAED…VDQP. The For Fru-6P isomerization activity role is filled by Lys604.

Homodimer.

Its subcellular location is the cytoplasm. It carries out the reaction D-fructose 6-phosphate + L-glutamine = D-glucosamine 6-phosphate + L-glutamate. Catalyzes the first step in hexosamine metabolism, converting fructose-6P into glucosamine-6P using glutamine as a nitrogen source. The polypeptide is Glutamine--fructose-6-phosphate aminotransferase [isomerizing] (Salmonella paratyphi A (strain ATCC 9150 / SARB42)).